The chain runs to 240 residues: MSEITKITAQKRRGRYNIFIDGTYAFPVSETTLVDYRLAKGMVLTAETIAQIKSSEVTAMGLEIGLTYISHQSRTSKEVSDRLAKEDLPADVIQKVLTRLTDLGFLDDADYAHRYIEEHLKMGELGPRTLQHKLQQKGLKPDLLANELAAIPTTAWLDAAVRAGQKNLRHHQHRAYKDQLQRLRVALMQKGFDDTTIQTAIATIDPQPDPEAESDLLKLEAAKQWRLKAKYGDRERKQKV.

The protein belongs to the RecX family.

It is found in the cytoplasm. Modulates RecA activity. This chain is Regulatory protein RecX, found in Lacticaseibacillus paracasei (strain ATCC 334 / BCRC 17002 / CCUG 31169 / CIP 107868 / KCTC 3260 / NRRL B-441) (Lactobacillus paracasei).